The following is a 424-amino-acid chain: Histidine--tRNA ligase (424 aa).

It belongs to the class-II aminoacyl-tRNA synthetase family. In terms of assembly, homodimer.

It localises to the cytoplasm. It carries out the reaction tRNA(His) + L-histidine + ATP = L-histidyl-tRNA(His) + AMP + diphosphate + H(+). This is Histidine--tRNA ligase from Shigella boydii serotype 18 (strain CDC 3083-94 / BS512).